The sequence spans 227 residues: Protein FAM3C (227 aa).

The first 24 residues, 1-24 (MRVAGAAKLVVAVAVFLLTFYVIS), serve as a signal peptide directing secretion. 2 disulfide bridges follow: C58–C86 and C64–C221. The 159-residue stretch at 67–225 (KHFAFKMASG…VEMEGCIPQK (159 aa)) folds into the GG-type lectin domain.

The protein belongs to the FAM3 family. Present in most secretory epithelia (at protein level).

Its subcellular location is the secreted. The protein localises to the cytoplasmic vesicle. Its function is as follows. May be involved in retinal laminar formation. Promotes epithelial to mesenchymal transition. The sequence is that of Protein FAM3C (FAM3C) from Homo sapiens (Human).